The following is a 201-amino-acid chain: Ribonuclease HII (201 aa).

One can recognise an RNase H type-2 domain in the interval 11-201 (LRECGCDEAG…VVDADRPTTE (191 aa)). 3 residues coordinate a divalent metal cation: Asp17, Glu18, and Asp109.

The protein belongs to the RNase HII family. Mn(2+) serves as cofactor. It depends on Mg(2+) as a cofactor.

It localises to the cytoplasm. The enzyme catalyses Endonucleolytic cleavage to 5'-phosphomonoester.. Its function is as follows. Endonuclease that specifically degrades the RNA of RNA-DNA hybrids. The protein is Ribonuclease HII (rnhB) of Porphyromonas gingivalis (strain ATCC BAA-308 / W83).